The primary structure comprises 371 residues: uncharacterized protein (371 aa).

8 helical membrane-spanning segments follow: residues 4 to 24 (LPMLWFFFCVTVLIIGYFIYG), 60 to 82 (LIQLLNIAGTGPIFGPILGALYG), 87 to 109 (LWIVIGCIFAGAVHDYFCGMLSI), 130 to 150 (VFINTLALVLLLLVGVVFVAS), 197 to 217 (VVAVWTAIIFAYYILATLLPV), 224 to 244 (IYPLFGALLLFMSVGMVYGLV), 282 to 302 (VPIWPLLFLTISCGALSGFHA), and 320 to 340 (FIFYGAMITEGVIALVWCMVG).

Belongs to the peptide transporter carbon starvation (CstA) (TC 2.A.114) family.

It is found in the cell membrane. This is an uncharacterized protein from Haemophilus influenzae (strain ATCC 51907 / DSM 11121 / KW20 / Rd).